Reading from the N-terminus, the 435-residue chain is NADH-quinone oxidoreductase subunit D (435 aa).

The protein belongs to the complex I 49 kDa subunit family. In terms of assembly, NDH-1 is composed of 14 different subunits. Subunits NuoB, C, D, E, F, and G constitute the peripheral sector of the complex.

It is found in the cell inner membrane. It catalyses the reaction a quinone + NADH + 5 H(+)(in) = a quinol + NAD(+) + 4 H(+)(out). NDH-1 shuttles electrons from NADH, via FMN and iron-sulfur (Fe-S) centers, to quinones in the respiratory chain. The immediate electron acceptor for the enzyme in this species is believed to be ubiquinone. Couples the redox reaction to proton translocation (for every two electrons transferred, four hydrogen ions are translocated across the cytoplasmic membrane), and thus conserves the redox energy in a proton gradient. The polypeptide is NADH-quinone oxidoreductase subunit D (Xanthomonas axonopodis pv. citri (strain 306)).